A 604-amino-acid chain; its full sequence is MSDGSGRYVPPHIRRGGGNSHESAAADGLSGSRYSGNGFFSSPNRGNHKSSGGFFGSRPFNDRRTGQGSRASGSGGFGGSGGRYGWVNGKHVPYPKNPRLEMELFGNATDHVTSGINFDNYDDIPVEASGDNVPEAITEFKSPPLDELLLENVELANFSKPTPVQKYSIPIVTKNRDLMACAQTGSGKTGGFLFPVLSELFLNGPAPLPEHTRHSYMRKCYPSALVLAPTRELAIQIFDEAKKYTYRSWVKPYVVYGGAPIGQQMRDMDRGCNLLVATPGRLNDLLERGKISLVNVKYLVLDEADRMLDMGFEPQIRHIVEDCDMPSVNDRQTLMFSATFPREIQHLARDFLKDYIFLSVGRVGSTSENIQQKVLFVEDYDKNSALLDILINEIDGLTLVFVETKRMADQLTDFLIVQNFKATAIHGDRTQAERERALHAFRNGIANILVATAVAARGLDIPNVTNVINYDLPTDIDDYVHRIGRTGRAGNVGVATSFFNSNSMNIAKELMDLLTEANQEVPQFLVNMVQDSMRFGRGGRNSRTGSNRGRGSNTRDYRHSNKDDWGSLGSSRRGFRSNDNRGFGNNWGSSSGDGFTNKAANSWW.

Residues 1–79 (MSDGSGRYVP…RASGSGGFGG (79 aa)) are disordered. Residues 32–45 (SRYSGNGFFSSPNR) are compositionally biased toward polar residues. Positions 138–166 (TEFKSPPLDELLLENVELANFSKPTPVQK) match the Q motif motif. Residues 169–358 (IPIVTKNRDL…RDFLKDYIFL (190 aa)) form the Helicase ATP-binding domain. 182 to 189 (AQTGSGKT) contributes to the ATP binding site. Residues 302–305 (DEAD) carry the DEAD box motif. The Helicase C-terminal domain maps to 386 to 529 (LLDILINEID…EVPQFLVNMV (144 aa)). Residues 535 to 591 (FGRGGRNSRTGSNRGRGSNTRDYRHSNKDDWGSLGSSRRGFRSNDNRGFGNNWGSSS) are disordered. The span at 541-552 (NSRTGSNRGRGS) shows a compositional bias: low complexity. Basic and acidic residues predominate over residues 553 to 565 (NTRDYRHSNKDDW).

This sequence belongs to the DEAD box helicase family. DDX3/DED1 subfamily.

Its subcellular location is the cytoplasm. It catalyses the reaction ATP + H2O = ADP + phosphate + H(+). ATP-binding RNA helicase involved in translation initiation. Remodels RNA in response to ADP and ATP concentrations by facilitating disruption, but also formation of RNA duplexes. Redundant to DED1, may be required in conditions in which DED1 expression is decreased. The sequence is that of ATP-dependent RNA helicase DBP1 (DBP1) from Candida glabrata (strain ATCC 2001 / BCRC 20586 / JCM 3761 / NBRC 0622 / NRRL Y-65 / CBS 138) (Yeast).